The chain runs to 389 residues: Phosphoribosylformylglycinamidine cyclo-ligase, chloroplastic (389 aa).

Residues 1-58 (MEARILQSSSSCYSSLYAVNRSRFSSVSSPKPFSVSFAQTTRTRTRVLSMSKKDGRTD) constitute a chloroplast transit peptide. The interval 46-65 (RVLSMSKKDGRTDKDDDTDS) is disordered.

It belongs to the AIR synthase family.

It is found in the plastid. It localises to the chloroplast. The enzyme catalyses 2-formamido-N(1)-(5-O-phospho-beta-D-ribosyl)acetamidine + ATP = 5-amino-1-(5-phospho-beta-D-ribosyl)imidazole + ADP + phosphate + H(+). Its pathway is purine metabolism; IMP biosynthesis via de novo pathway; 5-amino-1-(5-phospho-D-ribosyl)imidazole from N(2)-formyl-N(1)-(5-phospho-D-ribosyl)glycinamide: step 2/2. The protein is Phosphoribosylformylglycinamidine cyclo-ligase, chloroplastic (PUR5) of Arabidopsis thaliana (Mouse-ear cress).